Reading from the N-terminus, the 263-residue chain is Copper homeostasis protein cutC homolog (263 aa).

It belongs to the CutC family.

In terms of biological role, involved in copper homeostasis. The chain is Copper homeostasis protein cutC homolog from Drosophila melanogaster (Fruit fly).